The primary structure comprises 64 residues: Small ribosomal subunit protein bS21 (64 aa).

A disordered region spans residues 39–64 (EKPSVKRKKKALAAKKRAVKKARKSF). Basic residues predominate over residues 43-64 (VKRKKKALAAKKRAVKKARKSF).

It belongs to the bacterial ribosomal protein bS21 family.

This is Small ribosomal subunit protein bS21 (rpsU) from Myxococcus xanthus.